A 445-amino-acid chain; its full sequence is 3-phosphoshikimate 1-carboxyvinyltransferase (445 aa).

3-phosphoshikimate-binding residues include K21, S22, and R26. K21 is a binding site for phosphoenolpyruvate. Positions 92 and 120 each coordinate phosphoenolpyruvate. Residues S165, Q166, D307, and K334 each coordinate 3-phosphoshikimate. Q166 provides a ligand contact to phosphoenolpyruvate. The Proton acceptor role is filled by D307. Phosphoenolpyruvate-binding residues include R338, R379, and K405.

Belongs to the EPSP synthase family. As to quaternary structure, monomer.

It is found in the cytoplasm. It carries out the reaction 3-phosphoshikimate + phosphoenolpyruvate = 5-O-(1-carboxyvinyl)-3-phosphoshikimate + phosphate. Its pathway is metabolic intermediate biosynthesis; chorismate biosynthesis; chorismate from D-erythrose 4-phosphate and phosphoenolpyruvate: step 6/7. Its function is as follows. Catalyzes the transfer of the enolpyruvyl moiety of phosphoenolpyruvate (PEP) to the 5-hydroxyl of shikimate-3-phosphate (S3P) to produce enolpyruvyl shikimate-3-phosphate and inorganic phosphate. The chain is 3-phosphoshikimate 1-carboxyvinyltransferase from Chlamydia pneumoniae (Chlamydophila pneumoniae).